An 892-amino-acid polypeptide reads, in one-letter code: E3 ubiquitin ligase PQT3-like (892 aa).

The region spanning 3–76 (IYYKFKSARD…NTSVLIRRVP (74 aa)) is the DWNN domain. The segment at 210-224 (CHRCNIPGHFIQHCP) adopts a CCHC-type zinc-finger fold. Position 285 is a phosphoserine (Ser285). The RING-type; degenerate zinc finger occupies 295 to 333 (CPLCKEVMKDAALTSKCCYKSFCDKCIRDHIISKSMCVC). 3 disordered regions span residues 375–408 (DLESARCPPPKALSPTTSVASKGEKKPVLSNNND), 459–493 (TQAPKEEMQQQVAAGEPGKKKKKKPRVPGNDMQWN), and 623–892 (MLRK…RSRA). Ser404 bears the Phosphoserine mark. Residues 623–644 (MLRKRENERRPEGGKMFRDGEN) are compositionally biased toward basic and acidic residues. Positions 647 to 666 (MMMNNGTSASASSINPNKSR) are enriched in polar residues. Positions 674-692 (HDYDRRRRPEKRLSPEHPP) are enriched in basic and acidic residues. Positions 693–700 (TRKNISPS) match the Nuclear localization signal motif. Over residues 708–745 (ERYPDERDRQRDRERSRHQDVDREHDRTRDRRDEDRSR) the composition is skewed to basic and acidic residues. Positions 810 to 832 (SSSSTSVTDPSASASAAAAVGTS) are enriched in low complexity. At Ser866 the chain carries Phosphoserine. The segment covering 875-892 (SEDKLRYSKRGKGERSRA) has biased composition (basic and acidic residues).

It localises to the nucleus. It catalyses the reaction S-ubiquitinyl-[E2 ubiquitin-conjugating enzyme]-L-cysteine + [acceptor protein]-L-lysine = [E2 ubiquitin-conjugating enzyme]-L-cysteine + N(6)-ubiquitinyl-[acceptor protein]-L-lysine.. This chain is E3 ubiquitin ligase PQT3-like, found in Arabidopsis thaliana (Mouse-ear cress).